Here is a 667-residue protein sequence, read N- to C-terminus: Long-chain-fatty-acid--CoA ligase ACSBG2 (667 aa).

ATP-binding positions include 227–235, 418–423, D496, R511, and R624; these read TSGTTGTPK and EIYGMS.

This sequence belongs to the ATP-dependent AMP-binding enzyme family. Bubblegum subfamily. Testis- and brainstem-specific. Expressed in pubertal and adult testis. Enriched in germ cells and Sertoli cells while present at a lower level in Leydig cells. Present in testicular Sertoli cells and large motoneurons in the medulla oblongata and cervical spinal cord (at protein level).

Its subcellular location is the cytoplasm. The protein localises to the membrane. The catalysed reaction is a long-chain fatty acid + ATP + CoA = a long-chain fatty acyl-CoA + AMP + diphosphate. It carries out the reaction (5Z,8Z,11Z,14Z)-eicosatetraenoate + ATP + CoA = (5Z,8Z,11Z,14Z)-eicosatetraenoyl-CoA + AMP + diphosphate. The enzyme catalyses hexadecanoate + ATP + CoA = hexadecanoyl-CoA + AMP + diphosphate. It catalyses the reaction (9Z)-octadecenoate + ATP + CoA = (9Z)-octadecenoyl-CoA + AMP + diphosphate. The catalysed reaction is (9Z,12Z)-octadecadienoate + ATP + CoA = (9Z,12Z)-octadecadienoyl-CoA + AMP + diphosphate. It carries out the reaction tetracosanoate + ATP + CoA = tetracosanoyl-CoA + AMP + diphosphate. Its function is as follows. Catalyzes the conversion of fatty acids such as long chain and very long-chain fatty acids to their active form acyl-CoAs for both synthesis of cellular lipids, and degradation via beta-oxidation. Can activate diverse saturated, monosaturated and polyunsaturated fatty acids. Has increased ability to activate oleic and linoleic acid. May play a role in spermatogenesis. This is Long-chain-fatty-acid--CoA ligase ACSBG2 from Mus musculus (Mouse).